The sequence spans 472 residues: Guanine nucleotide-binding protein alpha-1 subunit (472 aa).

Residue Gly2 is the site of N-myristoyl glycine attachment. A lipid anchor (S-palmitoyl cysteine) is attached at Cys3. In terms of domain architecture, G-alpha spans Asn40–Ile472. Residues Lys43–Thr56 are G1 motif. Positions 51, 52, 53, 54, 55, and 56 each coordinate GTP. Ser55 serves as a coordination point for Mg(2+). The segment at Leu127–Asn235 is insert; not present in other G-proteins. Residues Gly162–Ser199 form a disordered region. Lys165 participates in a covalent cross-link: Glycyl lysine isopeptide (Lys-Gly) (interchain with G-Cter in ubiquitin). Residues Asp292–Thr300 form a G2 motif region. GTP is bound by residues Leu294, Thr300, Gly322, Asn388, Lys389, Asp391, and Ala444. A Mg(2+)-binding site is contributed by Thr300. The G3 motif stretch occupies residues Phe315–Arg324. A G4 motif region spans residues Ile384 to Asp391. Residues Thr442–Thr447 are G5 motif.

It belongs to the G-alpha family. G(q) subfamily. G proteins are composed of 3 units; alpha, beta and gamma. The alpha chain contains the guanine nucleotide binding site. In its GDP-bound form, binds to the G protein beta-gamma dimer STE4-STE18. Directly interacts with the beta subunit STE4. Probably forms preactivation complexes with unligated receptors STE2 and STE3. Interacts with FUS3. Pheromone-induced activation of GPA1 increases its association with FUS3. Interacts with SCP160. SCP160 binds specifically to the GTP-bound form of GPA1. Interacts with the phosphatidylinositol 3-kinase (PI3K) subunits VPS15 and VPS34 at the endosome. The GTP-bound form of GPA1 binds directly and selectively to the catalytic subunit VPS34, while the GDP-bound form binds to VPS15, which appears to function as an alternative G protein beta subunit for GPA1. Interacts with regulators of G protein signaling (RGS) proteins MDM1, RAX1, RGS2 and SST2, but SST2 alone binds preferentially to the transition state conformation of GPA1, indicating that it acts as a GAP for this G protein. Mg(2+) is required as a cofactor. In terms of processing, N-myristoylation by NMT1 is pheromone-stimulated and required for palmitoylation of Cys-3. This lipid modification anchors the protein to membranes. Depalmitoylated by YLR118C/APT1. Monoubiquitination targets the protein for degradation to the vacuole, and polyubiquitination tags the protein for degradation by the proteasome. This may be an additional signaling regulation mechanism.

Its subcellular location is the cell membrane. It localises to the endosome membrane. Alternates between an inactive form bound to GDP and an active form bound to GTP. Activated by the G protein coupled receptors (GPCRs) STE2 and STE3, which serve as guanine nucleotide-exchange factors (GEFs), and inactivated by SST2, probably acting as a GTPase-activating protein (GAP). Functionally, alpha subunit of the heterotrimeric guanine nucleotide-binding protein (G protein) that mediates mating pheromone signal transduction. Binding of alpha-factor or a-factor to its cognate transmembrane receptor STE2 and STE3, respectively, allows the receptor to serve as a guanine nucleotide exchange factor (GEF) on GPA1. The exchange of GDP for GTP on the G protein alpha subunit alters its interaction with the G protein beta subunit STE4, leading to dissociation of the G protein beta-gamma dimer STE4-STE18. The dissociated subunits activate downstream effectors to activate the mating response pathway and induce changes necessary to produce mating-competent cells. STE4-STE18 activate the downstream pheromone signaling MAP kinase cascade leading to expression of mating-specific genes, inducing cell cycle arrest in G1, promoting polarized cell growth to form mating projections (shmoos), and establishing the changes in plasma membrane, cell wall and nuclear envelope to permit cell-cell fusion (plasmogamy) and fusion of the two haploid nuclei (karyogamy). GPA1 transmits a signal that requires direct binding to the effector enzyme PI3K located at the endosome, promoting increased PI3 production. The intrinsic GTPase activity of GPA1 determines the duration of signaling, and is dramatically accelerated by the RGS protein SST2. In unstimulated cells, GDP-bound GPA1 sequesters the G protein beta-gamma subunit STE4-STE18, preventing it from activating the downstream effectors. Also down-regulates the signal by inhibiting the pheromone-induced accumulation of FUS3 in the nucleus. The protein is Guanine nucleotide-binding protein alpha-1 subunit (GPA1) of Saccharomyces cerevisiae (strain ATCC 204508 / S288c) (Baker's yeast).